The sequence spans 827 residues: Periplasmic nitrate reductase (827 aa).

A signal peptide (tat-type signal) is located at residues Met-1–Ala-33. The region spanning Ile-37–Asp-93 is the 4Fe-4S Mo/W bis-MGD-type domain. Residues Cys-44, Cys-47, Cys-51, and Cys-79 each coordinate [4Fe-4S] cluster. Residues Lys-81, Gln-148, Asn-173, Cys-177, Trp-210–Met-217, Ser-241–His-245, Gln-260–Asp-262, Met-370, Gln-374, Asn-480, Ser-506–Asp-507, Lys-529, Asp-556, and Thr-716–Thr-725 each bind Mo-bis(molybdopterin guanine dinucleotide). Phe-792 serves as a coordination point for substrate. Residues Asn-800 and Lys-817 each contribute to the Mo-bis(molybdopterin guanine dinucleotide) site.

This sequence belongs to the prokaryotic molybdopterin-containing oxidoreductase family. NasA/NapA/NarB subfamily. Component of the periplasmic nitrate reductase NapAB complex composed of NapA and NapB. It depends on [4Fe-4S] cluster as a cofactor. The cofactor is Mo-bis(molybdopterin guanine dinucleotide). In terms of processing, predicted to be exported by the Tat system. The position of the signal peptide cleavage has not been experimentally proven.

It is found in the periplasm. The enzyme catalyses 2 Fe(II)-[cytochrome] + nitrate + 2 H(+) = 2 Fe(III)-[cytochrome] + nitrite + H2O. In terms of biological role, catalytic subunit of the periplasmic nitrate reductase complex NapAB. Receives electrons from NapB and catalyzes the reduction of nitrate to nitrite. This Haemophilus influenzae (strain PittEE) protein is Periplasmic nitrate reductase.